Reading from the N-terminus, the 95-residue chain is Probable FAD-linked sulfhydryl oxidase OPG072 (95 aa).

The Intravirion portion of the chain corresponds to 1–8 (MNPKHWGR). The ERV/ALR sulfhydryl oxidase domain maps to 1 to 95 (MNPKHWGRAV…AIDVSKVKPL (95 aa)). The helical transmembrane segment at 9-25 (AVWTIIFIVLSQAGLDG) threads the bilayer. Residues 26–95 (NIEACKRKLY…AIDVSKVKPL (70 aa)) are Virion surface-facing. Cysteine 43 and cysteine 46 are joined by a disulfide.

This sequence belongs to the orthopoxvirus OPG072 family. Interacts with OPG128; this interaction involves formation of a transient disulfide-bonded intermediate, allowing disulfide bond transfer. FAD is required as a cofactor.

It localises to the virion membrane. The protein resides in the host cytoplasm. The catalysed reaction is 2 R'C(R)SH + O2 = R'C(R)S-S(R)CR' + H2O2. Functionally, FAD-dependent sulfhydryl oxidase that catalyzes disulfide bond formation. The complete pathway for formation of disulfide bonds in intracellular virion membrane proteins sequentially involves thiol-disulfide transfer between OPG072, OPG128 and OPG088. The polypeptide is Probable FAD-linked sulfhydryl oxidase OPG072 (OPG072) (Vaccinia virus (strain Copenhagen) (VACV)).